Consider the following 99-residue polypeptide: Aspartyl/glutamyl-tRNA(Asn/Gln) amidotransferase subunit C (99 aa).

This sequence belongs to the GatC family. Heterotrimer of A, B and C subunits.

It carries out the reaction L-glutamyl-tRNA(Gln) + L-glutamine + ATP + H2O = L-glutaminyl-tRNA(Gln) + L-glutamate + ADP + phosphate + H(+). It catalyses the reaction L-aspartyl-tRNA(Asn) + L-glutamine + ATP + H2O = L-asparaginyl-tRNA(Asn) + L-glutamate + ADP + phosphate + 2 H(+). Allows the formation of correctly charged Asn-tRNA(Asn) or Gln-tRNA(Gln) through the transamidation of misacylated Asp-tRNA(Asn) or Glu-tRNA(Gln) in organisms which lack either or both of asparaginyl-tRNA or glutaminyl-tRNA synthetases. The reaction takes place in the presence of glutamine and ATP through an activated phospho-Asp-tRNA(Asn) or phospho-Glu-tRNA(Gln). In Thermobifida fusca (strain YX), this protein is Aspartyl/glutamyl-tRNA(Asn/Gln) amidotransferase subunit C.